The following is a 409-amino-acid chain: Terpredoxin reductase (409 aa).

Position 7 to 38 (7 to 38 (TTVIVGAGHAGTAAAFFLREFGYHGRVLLLSA)) interacts with FAD. Residue 151–159 (GGGFIGLEI) coordinates NAD(+).

Requires FAD as cofactor.

The oxidation of alpha-terpineol by cytochrome p450-TERP requires the participation of a flavoprotein, terpredoxin reductase, and an iron-sulfur protein, terpredoxin, to mediate the transfer of electrons from NADH to P450 for oxygen activation. The protein is Terpredoxin reductase (terPA) of Pseudomonas sp.